We begin with the raw amino-acid sequence, 62 residues long: Photosystem II reaction center protein Z (62 aa).

Helical transmembrane passes span 8-28 (TLFALILFSFVLVVGVPVVFA) and 41-61 (LSGLGLWILLVFVVGILNSFV).

The protein belongs to the PsbZ family. As to quaternary structure, PSII is composed of 1 copy each of membrane proteins PsbA, PsbB, PsbC, PsbD, PsbE, PsbF, PsbH, PsbI, PsbJ, PsbK, PsbL, PsbM, PsbT, PsbY, PsbZ, Psb30/Ycf12, at least 3 peripheral proteins of the oxygen-evolving complex and a large number of cofactors. It forms dimeric complexes.

The protein localises to the plastid. It is found in the chloroplast thylakoid membrane. In terms of biological role, may control the interaction of photosystem II (PSII) cores with the light-harvesting antenna, regulates electron flow through the 2 photosystem reaction centers. PSII is a light-driven water plastoquinone oxidoreductase, using light energy to abstract electrons from H(2)O, generating a proton gradient subsequently used for ATP formation. This Stigeoclonium helveticum (Green alga) protein is Photosystem II reaction center protein Z.